A 132-amino-acid polypeptide reads, in one-letter code: Agouti-signaling protein (132 aa).

The first 22 residues, 1–22 (MDVTRLLLATLLVFLCFFTANS), serve as a signal peptide directing secretion. The N-linked (GlcNAc...) asparagine glycan is linked to Asn39. The disordered stretch occupies residues 62 to 85 (IGRKAAEKKRSSKKEASMKKVVRP). A compositionally biased stretch (basic and acidic residues) spans 65 to 79 (KAAEKKRSSKKEASM). 5 disulfides stabilise this stretch: Cys93–Cys108, Cys100–Cys114, Cys107–Cys125, Cys111–Cys132, and Cys116–Cys123. Residues 93-132 (CVATRNSCKPPAPACCDPCASCQCRFFRSACSCRVLSLNC) form the Agouti domain.

Widely expressed at low levels. Highly expressed in the skin. Expressed in adipose tissue.

It localises to the secreted. Its function is as follows. Involved in the regulation of melanogenesis. The binding of ASP to MC1R precludes alpha-MSH initiated signaling and thus blocks production of cAMP, leading to a down-regulation of eumelanogenesis (brown/black pigment) and thus increasing synthesis of pheomelanin (yellow/red pigment). In higher primates, agouti may affect the quality of hair pigmentation rather than its pattern of deposition. Could well play a role in neuroendocrine aspects of melanocortin action. May have some functional role in regulating the lipid metabolism with adipocytes. The sequence is that of Agouti-signaling protein (ASIP) from Homo sapiens (Human).